Here is a 463-residue protein sequence, read N- to C-terminus: FAD-dependent monooxygenase str9 (463 aa).

FAD-binding residues include glutamate 37, glycine 50, and arginine 114. Arginine 200 is a catalytic residue. Aspartate 334 lines the FAD pocket.

Belongs to the paxM FAD-dependent monooxygenase family.

The protein operates within mycotoxin biosynthesis. Its function is as follows. FAD-dependent monooxygenase; part of the gene cluster that mediates the biosynthesis of strobilurin A, an antifungal polyketide that contains a key beta-methoxyacrylate toxophore that targets the complex III of the mitochondrial electron transport chain. Strobilurin biosynthesis begins with construction of benzoyl CoA by step-wise elimination of ammonia from phenylalanine by the phenylalanine ammonia-lyase str11, oxygenation by str8 and retro-Claisen reaction to form benzoic acid, which is activated to its CoA thiolester benzoyl CoA by the dedicated CoA ligase str10. Benzoyl CoA forms the starter unit for the highly reducing polyketide synthase stpks1 that produces the polyketide prestrobilutin A. The FAD-dependent oxygenase str9 then catalyzes the key oxidative rearrangement responsible for the creation of the beta-methoxyacrylate toxophore. Str9 performs epoxidation of the 2,3 olefin of prestrobilutin A, followed by Meinwald rearrangement to furnish the aldehyde intermediate. Rapid enolization of the aldehyde intermediate would give the beta-methoxyacrylate skeleton and methylations catalyzed by str2 and str3 complete the synthesis and lead to the production of strobilurin A. The short-chain dehydrogenase stl2 and the dehydrogenase str4 play a role in the shunt pathway leading to the production of bolineol. The cluster encodes no obvious halogenase gene that could be involved in production of strobilurin B, nor any obvious dimethylallyl-transferase that could be involved in the production of strobilurin G. It is possible that unknown proteins encoded in, or near, the cluster (such as str1 or stl1) may form new classes of halogenases or dimethylally-transferases, or that the responsible genes are located elsewhere on the genome. Similarly, proteins encoded by str5/str6 hydrolases appear to have no chemical role in the biosynthesis of strobilurin A. Finally, no obvious self-resistance gene is found within the cluster. This Strobilurus tenacellus protein is FAD-dependent monooxygenase str9.